Reading from the N-terminus, the 256-residue chain is Thiazole synthase (256 aa).

Lys96 (schiff-base intermediate with DXP) is an active-site residue. Residues Gly157, 183-184, and 205-206 contribute to the 1-deoxy-D-xylulose 5-phosphate site; these read AG and NT.

The protein belongs to the ThiG family. As to quaternary structure, homotetramer. Forms heterodimers with either ThiH or ThiS.

It is found in the cytoplasm. It carries out the reaction [ThiS sulfur-carrier protein]-C-terminal-Gly-aminoethanethioate + 2-iminoacetate + 1-deoxy-D-xylulose 5-phosphate = [ThiS sulfur-carrier protein]-C-terminal Gly-Gly + 2-[(2R,5Z)-2-carboxy-4-methylthiazol-5(2H)-ylidene]ethyl phosphate + 2 H2O + H(+). The protein operates within cofactor biosynthesis; thiamine diphosphate biosynthesis. Its function is as follows. Catalyzes the rearrangement of 1-deoxy-D-xylulose 5-phosphate (DXP) to produce the thiazole phosphate moiety of thiamine. Sulfur is provided by the thiocarboxylate moiety of the carrier protein ThiS. In vitro, sulfur can be provided by H(2)S. In Bacillus anthracis, this protein is Thiazole synthase.